A 431-amino-acid chain; its full sequence is Glucose-1-phosphate adenylyltransferase (431 aa).

A beta-D-fructose 1,6-bisphosphate-binding site is contributed by K39. Positions 40, 46, and 52 each coordinate AMP. Alpha-D-glucose 1-phosphate is bound at residue Y114. Position 130 (R130) interacts with AMP. Alpha-D-glucose 1-phosphate-binding positions include G179, 194 to 195, and S212; that span reads EK. Residues E370 and R386 each coordinate AMP. Beta-D-fructose 1,6-bisphosphate is bound by residues 419–423 and 429–431; these read REMLR and QER.

Belongs to the bacterial/plant glucose-1-phosphate adenylyltransferase family. In terms of assembly, homotetramer.

The catalysed reaction is alpha-D-glucose 1-phosphate + ATP + H(+) = ADP-alpha-D-glucose + diphosphate. It functions in the pathway glycan biosynthesis; glycogen biosynthesis. Allosterically activated by fructose-1,6-bisphosphate (F16BP) and inhibited by AMP. Functionally, involved in the biosynthesis of ADP-glucose, a building block required for the elongation reactions to produce glycogen. Catalyzes the reaction between ATP and alpha-D-glucose 1-phosphate (G1P) to produce pyrophosphate and ADP-Glc. This chain is Glucose-1-phosphate adenylyltransferase, found in Shigella dysenteriae serotype 1 (strain Sd197).